The primary structure comprises 366 residues: Histidinol-phosphate aminotransferase 2 (366 aa).

A compositionally biased stretch (polar residues) spans 1 to 11; that stretch reads MQVKDQLSSLQ. The interval 1–21 is disordered; that stretch reads MQVKDQLSSLQPYKPGKSPEQ. K222 carries the post-translational modification N6-(pyridoxal phosphate)lysine.

The protein belongs to the class-II pyridoxal-phosphate-dependent aminotransferase family. Histidinol-phosphate aminotransferase subfamily. As to quaternary structure, homodimer. The cofactor is pyridoxal 5'-phosphate.

It carries out the reaction L-histidinol phosphate + 2-oxoglutarate = 3-(imidazol-4-yl)-2-oxopropyl phosphate + L-glutamate. The protein operates within amino-acid biosynthesis; L-histidine biosynthesis; L-histidine from 5-phospho-alpha-D-ribose 1-diphosphate: step 7/9. The protein is Histidinol-phosphate aminotransferase 2 (hisC2) of Bacillus anthracis.